A 168-amino-acid polypeptide reads, in one-letter code: Probable prefoldin subunit 5 (168 aa).

It belongs to the prefoldin subunit alpha family. Heterohexamer of two PFD-alpha type and four PFD-beta type subunits.

In terms of biological role, binds specifically to cytosolic chaperonin (c-CPN) and transfers target proteins to it. Binds to nascent polypeptide chain and promotes folding in an environment in which there are many competing pathways for nonnative proteins. The protein is Probable prefoldin subunit 5 of Drosophila melanogaster (Fruit fly).